The following is a 558-amino-acid chain: MLLDKLSVLSFLGLAPIFAAAQLSGSVGPLTSASTKAATKTCNVLDYGAKADKSTDLGAPLASAFADCKSGGLVYVPSGDYALSTWARLSGGEAWALQIDGIIYRTGTDGGNMIYIEHSSDFELFSSTSEGAMQGLGYEFHADDNWSGPRLLRLYEVTDFSVHDFILVDSPSFHFSLDTCTNGEIYNMAIRGGNHGGLDGIDVWSNNIWVHDVEVTNKDECVTVKSPSKNILIESIYCNWSGGCGMGSFGSDTNVSDITYRNIYTWSSNNMMLIKSNGGSGFVENVLLENFIGHGNAYSLDIDSYWASMSAVDGDGVQLSNITVKNWKGTEAYGAERGPVKVVCADGAPCYDITIEDFAMWTEEGDSQWYSCESAYGSGYCLQDSDDHVSYSVTTSTVSSAPSGYSATSMAADLTTDFGSTVSIPIPTIPTSFYPGATPYSALMANSASTAAASSIASHATVHSSSASVAASVPSAVAPSESIPAATSAVVSSAAAIAPSPAVGAQEGSTTSAPSFAAPSGAGNSPQGPTGASGFGEKGQQGEQGEQGEQGEQGVCYV.

An N-terminal signal peptide occupies residues 1–21 (MLLDKLSVLSFLGLAPIFAAA). Cys42 and Cys68 are disulfide-bonded. An N-linked (GlcNAc...) asparagine glycan is attached at Asn145. The active-site Proton donor is the Asp219. Cysteines 221 and 238 form a disulfide. N-linked (GlcNAc...) asparagine glycosylation is found at Asn239 and Asn254. The active site involves His294. Residue Asn321 is glycosylated (N-linked (GlcNAc...) asparagine). 2 disulfides stabilise this stretch: Cys344/Cys350 and Cys372/Cys381. The segment covering 503-526 (VGAQEGSTTSAPSFAAPSGAGNSP) has biased composition (low complexity). A disordered region spans residues 503–558 (VGAQEGSTTSAPSFAAPSGAGNSPQGPTGASGFGEKGQQGEQGEQGEQGEQGVCYV).

Belongs to the glycosyl hydrolase 28 family.

It is found in the secreted. The enzyme catalyses Endohydrolysis of alpha-D-GalA-(1-&gt;2)-alpha-L-Rha glycosidic bond in the rhamnogalacturonan I backbone with initial inversion of anomeric configuration releasing oligosaccharides with beta-D-GalA at the reducing end.. In terms of biological role, pectinolytic enzymes consist of four classes of enzymes: pectine lyase, polygalacturonase, pectin methylesterase and rhamnogalacturonase. Hydrolyzes alpha-D-galacturonopyranosyl-(1,2)-alpha-L-rhamnopyranosyl linkages in the backbone of the hairy regions of pectins. The sequence is that of Probable rhamnogalacturonase B (rhgB) from Aspergillus niger (strain ATCC MYA-4892 / CBS 513.88 / FGSC A1513).